The sequence spans 195 residues: ATP-dependent Clp protease proteolytic subunit (195 aa).

The Nucleophile role is filled by Ser-99. His-124 is an active-site residue.

This sequence belongs to the peptidase S14 family. As to quaternary structure, fourteen ClpP subunits assemble into 2 heptameric rings which stack back to back to give a disk-like structure with a central cavity, resembling the structure of eukaryotic proteasomes.

The protein localises to the cytoplasm. The enzyme catalyses Hydrolysis of proteins to small peptides in the presence of ATP and magnesium. alpha-casein is the usual test substrate. In the absence of ATP, only oligopeptides shorter than five residues are hydrolyzed (such as succinyl-Leu-Tyr-|-NHMec, and Leu-Tyr-Leu-|-Tyr-Trp, in which cleavage of the -Tyr-|-Leu- and -Tyr-|-Trp bonds also occurs).. In terms of biological role, cleaves peptides in various proteins in a process that requires ATP hydrolysis. Has a chymotrypsin-like activity. Plays a major role in the degradation of misfolded proteins. The protein is ATP-dependent Clp protease proteolytic subunit of Coxiella burnetii (strain CbuG_Q212) (Coxiella burnetii (strain Q212)).